Here is a 330-residue protein sequence, read N- to C-terminus: Beta-ketoacyl-[acyl-carrier-protein] synthase III (330 aa).

Residues Cys115 and His255 contribute to the active site. Residues 256 to 260 (QANFR) are ACP-binding. The active site involves Asn285.

It belongs to the thiolase-like superfamily. FabH family. Homodimer.

It localises to the cytoplasm. It catalyses the reaction malonyl-[ACP] + acetyl-CoA + H(+) = 3-oxobutanoyl-[ACP] + CO2 + CoA. Its pathway is lipid metabolism; fatty acid biosynthesis. In terms of biological role, catalyzes the condensation reaction of fatty acid synthesis by the addition to an acyl acceptor of two carbons from malonyl-ACP. Catalyzes the first condensation reaction which initiates fatty acid synthesis and may therefore play a role in governing the total rate of fatty acid production. Possesses both acetoacetyl-ACP synthase and acetyl transacylase activities. Its substrate specificity determines the biosynthesis of branched-chain and/or straight-chain of fatty acids. The polypeptide is Beta-ketoacyl-[acyl-carrier-protein] synthase III (Helicobacter pylori (strain G27)).